We begin with the raw amino-acid sequence, 769 residues long: Non-secreted LysM effector LysM17 (769 aa).

Residues 173–193 form a helical membrane-spanning segment; it reads LPPLATAIPLAVVWASLASVI. N-linked (GlcNAc...) asparagine glycans are attached at residues N305, N368, N423, and N452. LysM domains lie at 498-543 and 562-610; these read RTIQ…HVCC and YSNL…KICL. N-linked (GlcNAc...) asparagine glycans are attached at residues N631, N671, N706, and N734.

It belongs to the secreted LysM effector family.

It is found in the membrane. Functionally, non-secreted LysM effector that might be involved in manipulation of host defenses for successful infection. In Penicillium expansum (Blue mold rot fungus), this protein is Non-secreted LysM effector LysM17.